The sequence spans 585 residues: Pre-hexon-linking protein IIIa (585 aa).

Residues 1-24 (MMQDATDPAVRAALQSQPSGLNST) form a disordered region. The peripentonal hexon-tethering domain stretch occupies residues 1–106 (MMQDATDPAV…ALLQRVARYN (106 aa)). Residues 14–24 (LQSQPSGLNST) show a composition bias toward polar residues. Residues 138–251 (GSMVALNAFL…FTDSGSVSRD (114 aa)) are binding to hexon-linking protein. Serine 225 carries the phosphoserine; by host modification. Threonine 274 carries the phosphothreonine; by host modification. Serine 310, serine 444, serine 449, serine 450, serine 452, serine 469, and serine 473 each carry phosphoserine; by host. The tract at residues 438-475 (AALRKESFRRPSSLSDLGAAAPRSDASSPFPSLIGSFT) is disordered. Positions 462–475 (DASSPFPSLIGSFT) are enriched in polar residues. Tyrosine 490 carries the post-translational modification Phosphotyrosine; by host. Serine 494 and serine 515 each carry phosphoserine; by host. A disordered region spans residues 528–573 (QEHRDVPGPRPPTRRQRHDRQRGLVWEDDDSADDSSVLDLGGSGNP). Residues 571–585 (GNPFAHLRPRLGRMF) constitute a propeptide that is removed on maturation.

Belongs to the adenoviridae hexon-linking protein IIIa family. As to quaternary structure, interacts with hexon proteins; this interaction tethers the peripentonal hexons to hexons situated in the facet. Interacts with the penton protein (via N-terminus). Interacts with packaging protein 3; this interaction is required to promote correct genome packaging. Post-translationally, cleaved near the C-terminus by the viral protease during virion maturation to form the mature protein.

It is found in the virion. The protein localises to the host nucleus. Functionally, structural component of the virion that acts as a cement protein on the capsid exterior which mediates the interactions between the hexons, including the peripentonal hexons, and reaches all the way to the penton vertices. Two hexon linking proteins IIIa, one from each facet, stabilize the unique edge interface between a pair of facets. As the virus enters the host cell, hexon linking proteins IIIa are shed concomitant with virion acidification in the endosome. During virus assembly, seems to play a role in the serotype specificity of the packaging of viral DNA via its interaction with packaging protein 3. This chain is Pre-hexon-linking protein IIIa, found in Human adenovirus C serotype 2 (HAdV-2).